We begin with the raw amino-acid sequence, 312 residues long: Ribosomal RNA small subunit methyltransferase H (312 aa).

S-adenosyl-L-methionine contacts are provided by residues 34–36 (AGH), aspartate 54, phenylalanine 81, aspartate 102, and glutamine 109.

It belongs to the methyltransferase superfamily. RsmH family.

It localises to the cytoplasm. It catalyses the reaction cytidine(1402) in 16S rRNA + S-adenosyl-L-methionine = N(4)-methylcytidine(1402) in 16S rRNA + S-adenosyl-L-homocysteine + H(+). In terms of biological role, specifically methylates the N4 position of cytidine in position 1402 (C1402) of 16S rRNA. In Geotalea daltonii (strain DSM 22248 / JCM 15807 / FRC-32) (Geobacter daltonii), this protein is Ribosomal RNA small subunit methyltransferase H.